The chain runs to 392 residues: Phospho-N-acetylmuramoyl-pentapeptide-transferase (392 aa).

10 helical membrane passes run 28–48 (RALM…PFVI), 76–96 (TMGG…WFDL), 100–120 (FVWI…VDDW), 137–157 (YLWQ…SISE), 193–213 (ISYP…IVGS), 225–245 (GLAI…AYVT), 262–282 (SGEL…FLWF), 289–309 (VFMG…IAVI), 314–334 (IVLA…MLQV), and 369–389 (QVVV…LSTL).

This sequence belongs to the glycosyltransferase 4 family. MraY subfamily. It depends on Mg(2+) as a cofactor.

Its subcellular location is the cell inner membrane. It carries out the reaction UDP-N-acetyl-alpha-D-muramoyl-L-alanyl-gamma-D-glutamyl-meso-2,6-diaminopimeloyl-D-alanyl-D-alanine + di-trans,octa-cis-undecaprenyl phosphate = di-trans,octa-cis-undecaprenyl diphospho-N-acetyl-alpha-D-muramoyl-L-alanyl-D-glutamyl-meso-2,6-diaminopimeloyl-D-alanyl-D-alanine + UMP. It functions in the pathway cell wall biogenesis; peptidoglycan biosynthesis. In terms of biological role, catalyzes the initial step of the lipid cycle reactions in the biosynthesis of the cell wall peptidoglycan: transfers peptidoglycan precursor phospho-MurNAc-pentapeptide from UDP-MurNAc-pentapeptide onto the lipid carrier undecaprenyl phosphate, yielding undecaprenyl-pyrophosphoryl-MurNAc-pentapeptide, known as lipid I. This chain is Phospho-N-acetylmuramoyl-pentapeptide-transferase, found in Polaromonas naphthalenivorans (strain CJ2).